The sequence spans 331 residues: Adenosine deaminase (331 aa).

2 residues coordinate Zn(2+): His-12 and His-14. Residues His-14, Asp-16, and Gly-170 each contribute to the substrate site. His-197 serves as a coordination point for Zn(2+). Catalysis depends on Glu-200, which acts as the Proton donor. Asp-278 lines the Zn(2+) pocket. Asp-279 lines the substrate pocket.

The protein belongs to the metallo-dependent hydrolases superfamily. Adenosine and AMP deaminases family. Adenosine deaminase subfamily. Zn(2+) serves as cofactor.

It carries out the reaction adenosine + H2O + H(+) = inosine + NH4(+). The catalysed reaction is 2'-deoxyadenosine + H2O + H(+) = 2'-deoxyinosine + NH4(+). Functionally, catalyzes the hydrolytic deamination of adenosine and 2-deoxyadenosine. The chain is Adenosine deaminase from Shewanella baltica (strain OS223).